The chain runs to 198 residues: FMN-dependent NADH:quinone oxidoreductase (198 aa).

FMN contacts are provided by residues serine 10, 16 to 18 (SQS), 94 to 97 (MYNF), and 138 to 141 (TRGG).

Belongs to the azoreductase type 1 family. As to quaternary structure, homodimer. The cofactor is FMN.

The enzyme catalyses 2 a quinone + NADH + H(+) = 2 a 1,4-benzosemiquinone + NAD(+). It carries out the reaction N,N-dimethyl-1,4-phenylenediamine + anthranilate + 2 NAD(+) = 2-(4-dimethylaminophenyl)diazenylbenzoate + 2 NADH + 2 H(+). Quinone reductase that provides resistance to thiol-specific stress caused by electrophilic quinones. In terms of biological role, also exhibits azoreductase activity. Catalyzes the reductive cleavage of the azo bond in aromatic azo compounds to the corresponding amines. The polypeptide is FMN-dependent NADH:quinone oxidoreductase (Shewanella baltica (strain OS223)).